Here is a 467-residue protein sequence, read N- to C-terminus: Iroquois-class homeodomain protein irx-1-A (467 aa).

The segment at residues 126–188 (DPGRPKNATR…NARRRLKKEN (63 aa)) is a DNA-binding region (homeobox; TALE-type). Disordered regions lie at residues 197 to 306 (KEDD…PPHS), 318 to 344 (TSPDGALKSSPPPSQGNHTSPPIQHPA), and 410 to 467 (SLSS…LPSA). 2 stretches are compositionally biased toward acidic residues: residues 215-225 (EDDEEIDLESI) and 233-244 (NDGEQSNEEEDE). Residues 245–262 (KLEHLRQGEKESLKKESE) show a composition bias toward basic and acidic residues. The segment covering 415–431 (KTPERTSPKHSDRENVP) has biased composition (basic and acidic residues). The segment covering 447-460 (RENTLSQQEGTSRI) has biased composition (polar residues).

It belongs to the TALE/IRO homeobox family. In terms of tissue distribution, expressed early in neural differentiation in the neural plate, and expression continues in the neural tube after neural fold closure. Expressed in the presumptive midbrain territory. Also expressed in the prospective neural crest and the preplacodal field, anterior to the neural plate. Strongly expressed in the profundal placode and weakly expressed in the trigeminal placode. Also expressed in the mesoderm in the Spemann organizer from the start of gastrulation, and subsequently in its derivatives; namely in the notochord as well as in the somites of stage 25 embryos, and the somites and notochord of tailbud embryos. Also expressed in specific and overlapping dynamic patterns with irx2 and irx3 during pronephric kidney development. Renal expression begins in the dorsal region of the pronephric anlage at mid neurula stage and continues to at least tailbud stages where expression is confined to the intermediate tubule segment IT1. Renal expression is maintained at tadpole stages.

Its subcellular location is the nucleus. Its function is as follows. Acts partially redundantly with other irx members in neural patterning. Required for formation of the posterior forebrain, midbrain, hindbrain, and to a lesser extent, spinal cord. Acts early in neural plate development to induce expression of some but not all proneural genes, and specify a neural precursor state. Also up-regulates repressors that prevent neuronal differentiation. Patterns the neuroectoderm in both the anterior/posterior and dorsal/ventral axes. Acts primarily as a transcriptional repressor during neural development, and binds to the bmp4 promoter to repress gene expression and thus mediate down-regulation of bmp4 by wnt signaling. Controls multiple processes through bmp4-repression including neural plate development, neural crest specification and Spemann organizer development. Involved in the specification of the preplacodal field at the anterior border of the neural plate. Regulates the genetic cascade of interactions that are necessary for positioning the isthmus organizer and the formation of the midbrain-hindbrain boundary. Required during at least two stages of pronephros kidney development; during neurula stages, maintains transcription of key renal genes to define the size and identity of the pronephric anlage, probably in part through regulation of bmp-signaling. Subsequently required for proper formation of the intermediate tubule segment of the pronephros. Acts principally as a transcriptional activator during pronephros development. The sequence is that of Iroquois-class homeodomain protein irx-1-A (irx1-a) from Xenopus laevis (African clawed frog).